A 471-amino-acid chain; its full sequence is NADH-quinone oxidoreductase subunit N 1 (471 aa).

The next 14 membrane-spanning stretches (helical) occupy residues 11-31 (ALVP…AGAW), 39-59 (TIHV…ALAA), 81-101 (AIVL…VAGH), 105-125 (TEFV…AGAG), 127-147 (LIML…LAGW), 162-182 (LAGA…FGVA), 200-220 (AAAA…AGAV), 234-254 (PPPV…VAFY), 270-290 (LITA…AFAQ), 296-316 (MLGY…AVAG), 324-344 (ALLL…AVVA), 365-385 (ALAL…AVFV), 398-418 (GLAW…FYYL), and 444-464 (AVAL…GIVL).

The protein belongs to the complex I subunit 2 family. NDH-1 is composed of 14 different subunits. Subunits NuoA, H, J, K, L, M, N constitute the membrane sector of the complex.

It is found in the cell membrane. It carries out the reaction a quinone + NADH + 5 H(+)(in) = a quinol + NAD(+) + 4 H(+)(out). Functionally, NDH-1 shuttles electrons from NADH, via FMN and iron-sulfur (Fe-S) centers, to quinones in the respiratory chain. The immediate electron acceptor for the enzyme in this species is believed to be a menaquinone. Couples the redox reaction to proton translocation (for every two electrons transferred, four hydrogen ions are translocated across the cytoplasmic membrane), and thus conserves the redox energy in a proton gradient. The polypeptide is NADH-quinone oxidoreductase subunit N 1 (Streptomyces griseus subsp. griseus (strain JCM 4626 / CBS 651.72 / NBRC 13350 / KCC S-0626 / ISP 5235)).